Here is a 732-residue protein sequence, read N- to C-terminus: Prolyl tripeptidyl peptidase (732 aa).

Residues methionine 1–alanine 24 form the signal peptide. Residues serine 603, aspartate 678, and histidine 710 each act as charge relay system in the active site.

It belongs to the peptidase S9B family. Post-translationally, the N-terminus is blocked.

It carries out the reaction Hydrolysis of Xaa-Xaa-Pro-|-Yaa- releasing the N-terminal tripeptide of a peptide with Pro as the third residue (position P1) and where Yaa is not proline.. Its activity is regulated as follows. Strongly inhibited by diisopropyl fluorophosphate and Pefabloc. Weakly inhibited by 3,4-dichloroisocumarin. Not inhibited by phenylmethylsulfonyl fluoride, leupeptin, antipain or prolinal. Activated by iodoacetamide. Serine proteinase. Releases tripeptides from the free amino terminus of proteins. Has a requirement for Pro in the P1 position, but is inactivated by Pro in the P1' position. In Porphyromonas gingivalis (strain ATCC BAA-308 / W83), this protein is Prolyl tripeptidyl peptidase.